Here is a 134-residue protein sequence, read N- to C-terminus: Large ribosomal subunit protein uL24 (134 aa).

It belongs to the universal ribosomal protein uL24 family. As to quaternary structure, part of the 50S ribosomal subunit.

One of two assembly initiator proteins, it binds directly to the 5'-end of the 23S rRNA, where it nucleates assembly of the 50S subunit. Its function is as follows. Located at the polypeptide exit tunnel on the outside of the subunit. This Sulfolobus acidocaldarius (strain ATCC 33909 / DSM 639 / JCM 8929 / NBRC 15157 / NCIMB 11770) protein is Large ribosomal subunit protein uL24.